Here is a 201-residue protein sequence, read N- to C-terminus: Adenylyl-sulfate kinase (201 aa).

35 to 42 (GLSGSGKS) is an ATP binding site. The Phosphoserine intermediate role is filled by serine 109.

It belongs to the APS kinase family.

It catalyses the reaction adenosine 5'-phosphosulfate + ATP = 3'-phosphoadenylyl sulfate + ADP + H(+). It functions in the pathway sulfur metabolism; hydrogen sulfide biosynthesis; sulfite from sulfate: step 2/3. Its function is as follows. Catalyzes the synthesis of activated sulfate. This chain is Adenylyl-sulfate kinase, found in Salmonella typhi.